Reading from the N-terminus, the 231-residue chain is Proteasome subunit alpha type-2 (231 aa).

This sequence belongs to the peptidase T1A family. As to quaternary structure, the 26S proteasome consists of a 20S proteasome core and two 19S regulatory subunits. The 20S proteasome core is composed of 28 subunits that are arranged in four stacked rings, resulting in a barrel-shaped structure. The two end rings are each formed by seven alpha subunits, and the two central rings are each formed by seven beta subunits. The catalytic chamber with the active sites is on the inside of the barrel.

It is found in the cytoplasm. It localises to the nucleus. The proteasome is a multicatalytic proteinase complex which is characterized by its ability to cleave peptides with Arg, Phe, Tyr, Leu, and Glu adjacent to the leaving group at neutral or slightly basic pH. The proteasome has an ATP-dependent proteolytic activity. The sequence is that of Proteasome subunit alpha type-2 (pas-2) from Caenorhabditis elegans.